The following is a 385-amino-acid chain: S-adenosylmethionine synthase (385 aa).

Residue H16 participates in ATP binding. D18 serves as a coordination point for Mg(2+). A K(+)-binding site is contributed by E44. 2 residues coordinate L-methionine: E57 and Q100. Residues 100–110 are flexible loop; it reads QSPDINQGVDR. Residues 164–166, 230–231, D239, 245–246, A262, and K266 each bind ATP; these read DGK, KF, and RK. Residue D239 participates in L-methionine binding. K270 is a binding site for L-methionine.

This sequence belongs to the AdoMet synthase family. As to quaternary structure, homotetramer; dimer of dimers. It depends on Mg(2+) as a cofactor. K(+) is required as a cofactor.

The protein localises to the cytoplasm. The catalysed reaction is L-methionine + ATP + H2O = S-adenosyl-L-methionine + phosphate + diphosphate. It functions in the pathway amino-acid biosynthesis; S-adenosyl-L-methionine biosynthesis; S-adenosyl-L-methionine from L-methionine: step 1/1. Functionally, catalyzes the formation of S-adenosylmethionine (AdoMet) from methionine and ATP. The overall synthetic reaction is composed of two sequential steps, AdoMet formation and the subsequent tripolyphosphate hydrolysis which occurs prior to release of AdoMet from the enzyme. The protein is S-adenosylmethionine synthase of Helicobacter pylori (strain J99 / ATCC 700824) (Campylobacter pylori J99).